A 466-amino-acid chain; its full sequence is MTTTFPTVEFSAELLNKYNQGIPRYTSYPPATELNKEFDPSDFQTAINLGNYKKTPLSLYCHIPFCAKACYFCGCNTIITQHKPAVDPYLKAVAKQIALVAPLVDQQRPVQQLHWGGGTPNYLTLEQAEFLFNTITDAFPLAENAEISIEINPCYVDKDYIFALRQLGFNRISFGIQDFNSQVQQAVNRIQPEAMLFQVMDWIRQANFDSVNVDLIYGLPHQNLATFRETLRKTAQLNPDRIAVFNFAYVPWLKPVQKKMPESALPPAEEKLKIMQATIADLTEQGYVFIGMDHFAKPDDELAIAQRRGELHRNFQGYTTQPESDLLGFGITSISMLQDVYAQNHKTLKAFYNALDREVMPIEKGFKLSQDDLIRRTVIKELMCQFKLSAQELESKYNLGFDCDFNDYFAKELSALDVLEADGLLRRLGDGLEVTPRGRILIRNIAAVFDTYLQNKSKQQMFSRAI.

Residues 51-285 (NYKKTPLSLY…QATIADLTEQ (235 aa)) form the Radical SAM core domain. Residue Tyr-60 coordinates S-adenosyl-L-methionine. 2 residues coordinate [4Fe-4S] cluster: Cys-66 and Cys-70. Phe-72 provides a ligand contact to S-adenosyl-L-methionine. Cys-73 provides a ligand contact to [4Fe-4S] cluster. Residues Gly-117, 118 to 119 (GT), Glu-150, Gln-177, Arg-189, Asp-214, Ala-248, and Ile-334 each bind S-adenosyl-L-methionine.

Belongs to the anaerobic coproporphyrinogen-III oxidase family. In terms of assembly, monomer. The cofactor is [4Fe-4S] cluster.

It localises to the cytoplasm. It carries out the reaction coproporphyrinogen III + 2 S-adenosyl-L-methionine = protoporphyrinogen IX + 2 5'-deoxyadenosine + 2 L-methionine + 2 CO2. It functions in the pathway porphyrin-containing compound metabolism; protoporphyrin-IX biosynthesis; protoporphyrinogen-IX from coproporphyrinogen-III (AdoMet route): step 1/1. Its function is as follows. Involved in the heme and chlorophyll biosynthesis. Catalyzes the anaerobic oxidative decarboxylation of propionate groups of rings A and B of coproporphyrinogen III to yield the vinyl groups in protoporphyrinogen IX. In Synechocystis sp. (strain ATCC 27184 / PCC 6803 / Kazusa), this protein is Oxygen-independent coproporphyrinogen III oxidase (hemN).